We begin with the raw amino-acid sequence, 356 residues long: Nicotinate-nucleotide--dimethylbenzimidazole phosphoribosyltransferase (356 aa).

The Proton acceptor role is filled by E317.

Belongs to the CobT family. In terms of assembly, homodimer.

It carries out the reaction 5,6-dimethylbenzimidazole + nicotinate beta-D-ribonucleotide = alpha-ribazole 5'-phosphate + nicotinate + H(+). It participates in nucleoside biosynthesis; alpha-ribazole biosynthesis; alpha-ribazole from 5,6-dimethylbenzimidazole: step 1/2. Its function is as follows. Catalyzes the synthesis of alpha-ribazole-5'-phosphate from nicotinate mononucleotide (NAMN) and 5,6-dimethylbenzimidazole (DMB). This Salmonella paratyphi C (strain RKS4594) protein is Nicotinate-nucleotide--dimethylbenzimidazole phosphoribosyltransferase.